Here is a 623-residue protein sequence, read N- to C-terminus: Chaperone protein HtpG (623 aa).

The segment at 1 to 336 is a; substrate-binding; that stretch reads MSETNTQKAA…TEDLPLNVSR (336 aa). The segment at 337–546 is b; the sequence is EMLQATPVLA…DGGPDLTMQR (210 aa). A c region spans residues 547–623; sequence LMRRSGQAMP…ATLLAGPAAE (77 aa).

Belongs to the heat shock protein 90 family. Homodimer.

The protein resides in the cytoplasm. Molecular chaperone. Has ATPase activity. The protein is Chaperone protein HtpG of Gluconobacter oxydans (strain 621H) (Gluconobacter suboxydans).